The sequence spans 356 residues: Competence protein ComGA (356 aa).

144–151 is an ATP binding site; it reads GPTGSGKT.

This sequence belongs to the GSP E family.

It localises to the cell membrane. In terms of biological role, required for uptake of DNA by competent cells. In Bacillus subtilis (strain 168), this protein is Competence protein ComGA (comGA).